Reading from the N-terminus, the 386-residue chain is O-phospho-L-seryl-tRNA:Cys-tRNA synthase (386 aa).

Residues 89–90 (AR), N196, and 219–221 (SGH) each bind pyridoxal 5'-phosphate. K222 is modified (N6-(pyridoxal phosphate)lysine).

Belongs to the SepCysS family. As to quaternary structure, homodimer. Interacts with SepRS. Pyridoxal 5'-phosphate serves as cofactor.

It catalyses the reaction O-phospho-L-seryl-tRNA(Cys) + hydrogen sulfide + H(+) = L-cysteinyl-tRNA(Cys) + phosphate. Functionally, converts O-phospho-L-seryl-tRNA(Cys) (Sep-tRNA(Cys)) to L-cysteinyl-tRNA(Cys) (Cys-tRNA(Cys)). The protein is O-phospho-L-seryl-tRNA:Cys-tRNA synthase of Methanosarcina mazei (strain ATCC BAA-159 / DSM 3647 / Goe1 / Go1 / JCM 11833 / OCM 88) (Methanosarcina frisia).